The chain runs to 268 residues: WUSCHEL-related homeobox 12 (268 aa).

A compositionally biased stretch (polar residues) spans methionine 1–glutamate 16. Disordered stretches follow at residues methionine 1–tryptophan 22 and serine 173–asparagine 198. Residues proline 17–histidine 81 constitute a DNA-binding region (homeobox; WUS-type).

The protein belongs to the WUS homeobox family.

It localises to the nucleus. In terms of biological role, transcription factor which may be involved in developmental processes. This Arabidopsis thaliana (Mouse-ear cress) protein is WUSCHEL-related homeobox 12 (WOX12).